Consider the following 343-residue polypeptide: Insertion element IS630 uncharacterized 39 kDa protein (343 aa).

In Shigella sonnei, this protein is Insertion element IS630 uncharacterized 39 kDa protein.